Consider the following 421-residue polypeptide: Mitochondrial tRNA-specific 2-thiouridylase 1 (421 aa).

ATP contacts are provided by residues 10–17 and Met-36; that span reads ALSGGVDS. The interaction with target base in tRNA stretch occupies residues 96-98; sequence NPD. Catalysis depends on Cys-101, which acts as the Nucleophile. Cysteines 101 and 222 form a disulfide. Residue Gly-126 coordinates ATP. An interaction with tRNA region spans residues 171-173; sequence KDQ. Cys-222 (cysteine persulfide intermediate) is an active-site residue. The interaction with tRNA stretch occupies residues 334–335; sequence RH. A disordered region spans residues 395–421; sequence KGQRRAGMATESPSDSPEDGPGLSPLL.

Belongs to the MnmA/TRMU family. As to expression, ubiquitous. Abundantly expressed in tissues with high metabolic rates including heart, liver, kidney, and brain.

It localises to the mitochondrion. It catalyses the reaction 5-taurinomethyluridine(34) in tRNA + S-sulfanyl-L-cysteinyl-[protein] + AH2 + ATP = 5-taurinomethyl-2-thiouridine(34) in tRNA + L-cysteinyl-[protein] + A + AMP + diphosphate + H(+). Functionally, catalyzes the 2-thiolation of uridine at the wobble position (U34) of mitochondrial tRNA(Lys), tRNA(Glu) and tRNA(Gln). Required for the formation of 5-taurinomethyl-2-thiouridine (tm5s2U) of mitochondrial tRNA(Lys), tRNA(Glu), and tRNA(Gln) at the wobble position. ATP is required to activate the C2 atom of the wobble base. The chain is Mitochondrial tRNA-specific 2-thiouridylase 1 (TRMU) from Homo sapiens (Human).